Consider the following 190-residue polypeptide: Dynein axonemal light chain 1 (190 aa).

Position 2 is an N-acetylalanine (A2). LRR repeat units lie at residues 49–70 (NCEK…NGLK), 71–92 (NLRI…EAVG), 94–115 (TLEE…HIMK), and 116–137 (KLKI…VKLA). S56 carries the post-translational modification Phosphoserine. The LRRCT domain occupies 150-190 (NPLEEKHSAENNWIEEATKRVPKLKKLDGTPVIKGDEEEDN).

It belongs to the dynein light chain LC1-type family. In terms of assembly, interacts with ZMYND10 (via C-terminus). Interacts with DNAH5, a outer arm dynein heavy chain. Interacts with tubulin located within the A-tubule of the outer doublets in a ATP-independent manner. As to expression, expressed in tissues carrying motile cilia such as respiratory epithelia, ependyma and testis.

Its subcellular location is the cytoplasm. It localises to the cytoskeleton. The protein localises to the cilium axoneme. Functionally, part of the multisubunit axonemal ATPase complexes that generate the force for cilia motility and govern beat frequency. Component of the outer arm dynein (ODA). May be involved in a mechanosensory feedback mechanism controlling ODA activity based on external conformational cues by tethering the outer arm dynein heavy chain (DNAH5) to the microtubule within the axoneme. Important for ciliary function in the airways and for the function of the cilia that produce the nodal flow essential for the determination of the left-right asymmetry. This chain is Dynein axonemal light chain 1, found in Homo sapiens (Human).